The sequence spans 496 residues: Guanosine-5'-triphosphate,3'-diphosphate pyrophosphatase (496 aa).

The protein belongs to the GppA/Ppx family. GppA subfamily.

It catalyses the reaction guanosine 3'-diphosphate 5'-triphosphate + H2O = guanosine 3',5'-bis(diphosphate) + phosphate + H(+). It functions in the pathway purine metabolism; ppGpp biosynthesis; ppGpp from GTP: step 2/2. Catalyzes the conversion of pppGpp to ppGpp. Guanosine pentaphosphate (pppGpp) is a cytoplasmic signaling molecule which together with ppGpp controls the 'stringent response', an adaptive process that allows bacteria to respond to amino acid starvation, resulting in the coordinated regulation of numerous cellular activities. The polypeptide is Guanosine-5'-triphosphate,3'-diphosphate pyrophosphatase (Aeromonas hydrophila subsp. hydrophila (strain ATCC 7966 / DSM 30187 / BCRC 13018 / CCUG 14551 / JCM 1027 / KCTC 2358 / NCIMB 9240 / NCTC 8049)).